The chain runs to 247 residues: Small ribosomal subunit protein uS3 (247 aa).

The 71-residue stretch at 39–109 (IRSMIRSFPE…KVQIKVKEIK (71 aa)) folds into the KH type-2 domain. Positions 224 to 247 (RSRRESGQKSDELVRDERTHAERG) are disordered. Residues 227–247 (RESGQKSDELVRDERTHAERG) show a composition bias toward basic and acidic residues.

The protein belongs to the universal ribosomal protein uS3 family. As to quaternary structure, part of the 30S ribosomal subunit. Forms a tight complex with proteins S10 and S14.

Its function is as follows. Binds the lower part of the 30S subunit head. Binds mRNA in the 70S ribosome, positioning it for translation. This Treponema pallidum (strain Nichols) protein is Small ribosomal subunit protein uS3.